The primary structure comprises 138 residues: Putative phosphatidylinositol 3,4,5-trisphosphate 3-phosphatase TPTE2P1 (138 aa).

A C2 tensin-type domain is found at 1-75 (MPAAFPCVFP…FAVEILFGMV (75 aa)).

This is Putative phosphatidylinositol 3,4,5-trisphosphate 3-phosphatase TPTE2P1 (TPTE2P1) from Homo sapiens (Human).